The sequence spans 149 residues: MSNESNDLEKNISHLDPTGVDNAYIPPEQPETKHSRFNIDRGTLRNHFIAAVGEFCGTFMFLWCAYVICNVANHDVALTTEPEGSHPGQLIMIALGFGFSVMFSIWCFWWGFEPSRFSLFVFGQSHLTSQMCSDVVSSDHCWDGCWWCR.

A disordered region spans residues 1–35; the sequence is MSNESNDLEKNISHLDPTGVDNAYIPPEQPETKHS. Over 1-47 the chain is Cytoplasmic; it reads MSNESNDLEKNISHLDPTGVDNAYIPPEQPETKHSRFNIDRGTLRNH. A helical transmembrane segment spans residues 48–68; it reads FIAAVGEFCGTFMFLWCAYVI. At 69–89 the chain is on the extracellular side; sequence CNVANHDVALTTEPEGSHPGQ. A helical transmembrane segment spans residues 90-110; it reads LIMIALGFGFSVMFSIWCFWW. Topologically, residues 111-149 are cytoplasmic; it reads GFEPSRFSLFVFGQSHLTSQMCSDVVSSDHCWDGCWWCR.

Belongs to the MIP/aquaporin (TC 1.A.8) family.

It is found in the endoplasmic reticulum membrane. Its subcellular location is the cell membrane. Its function is as follows. Water channel required to facilitate the transport of water across membranes. Involved in freeze tolerance, osmotolerance and cell flocculation in liquid cultures. Is non-functional in most laboratory strains. This Saccharomyces cerevisiae (strain Lalvin EC1118 / Prise de mousse) (Baker's yeast) protein is Aquaporin-like protein 2 (AQY2-2).